A 138-amino-acid polypeptide reads, in one-letter code: Ribosomal RNA large subunit methyltransferase H (138 aa).

Residues Leu57, Gly86, and 105–110 contribute to the S-adenosyl-L-methionine site; that span reads LSPLTF.

It belongs to the RNA methyltransferase RlmH family. In terms of assembly, homodimer.

The protein resides in the cytoplasm. It catalyses the reaction pseudouridine(1915) in 23S rRNA + S-adenosyl-L-methionine = N(3)-methylpseudouridine(1915) in 23S rRNA + S-adenosyl-L-homocysteine + H(+). Its function is as follows. Specifically methylates the pseudouridine at position 1915 (m3Psi1915) in 23S rRNA. The sequence is that of Ribosomal RNA large subunit methyltransferase H from Prochlorococcus marinus (strain MIT 9301).